The chain runs to 602 residues: Solute carrier organic anion transporter family member 1C1 (602 aa).

At M1–K43 the chain is on the cytoplasmic side. The chain crosses the membrane as a helical span at residues V44–L63. Topologically, residues K64–G82 are extracellular. The chain crosses the membrane as a helical span at residues V83–G103. At A104–P109 the chain is on the cytoplasmic side. A helical transmembrane segment spans residues K110–E134. Residues Q135–E139 lie on the Extracellular side of the membrane. The chain crosses the membrane as a helical span at residues I140–L156. Residues E157–Y238 lie on the Cytoplasmic side of the membrane. The tract at residues P190–Q216 is disordered. Basic and acidic residues predominate over residues Q193–D214. A helical membrane pass occupies residues L239–F260. Topologically, residues G261–R280 are extracellular. A helical transmembrane segment spans residues A281 to M304. At K305–R308 the chain is on the cytoplasmic side. A helical membrane pass occupies residues I309 to L332. Topologically, residues F333–F444 are extracellular. One can recognise a Kazal-like domain in the interval R360–G415. Disulfide bonds link C366–C396, C372–C392, and C381–C413. N-linked (GlcNAc...) asparagine glycans are attached at residues N400, N410, and N423. A helical transmembrane segment spans residues L445–L467. Residues R468–S476 lie on the Cytoplasmic side of the membrane. A helical transmembrane segment spans residues F477–I502. Topologically, residues D503 to T536 are extracellular. A helical transmembrane segment spans residues V537 to L554. Over K555–L602 the chain is Cytoplasmic.

This sequence belongs to the organo anion transporter (TC 2.A.60) family.

The protein localises to the cell membrane. The catalysed reaction is 3,3',5'-triiodo-L-thyronine(out) = 3,3',5'-triiodo-L-thyronine(in). It carries out the reaction L-thyroxine(out) = L-thyroxine(in). The enzyme catalyses L-thyroxine sulfate(out) = L-thyroxine sulfate(in). Its function is as follows. Mediates the Na(+)-independent high affinity transport of organic anions such as the thyroid hormones L-thyroxine (T4), L-thyroxine sulfate (T4S), and 3,3',5'-triiodo-L-thyronine (reverse T3, rT3) at the plasma membrane. Regulates T4 levels in different brain regions by transporting T4, and also by serving as an export pump for T4S, which is a source of T4 after hydrolysis by local sulfatases. Increases the access of these substrates to the intracellular sites where they are metabolized by the deiodinases. Other potential substrates, such as triiodothyronine (T3), 17-beta-glucuronosyl estradiol (17beta-estradiol 17-O-(beta-D-glucuronate)), estrone-3-sulfate (E1S) and sulfobromophthalein (BSP) are transported with much lower efficiency. Transports T4 and E1S in a pH-insensitive manner. Facilitates the transport of thyroid hormones across the blood-brain barrier and into glia and neuronal cells in the brain. The protein is Solute carrier organic anion transporter family member 1C1 (SLCO1C1) of Macaca fascicularis (Crab-eating macaque).